A 292-amino-acid polypeptide reads, in one-letter code: MSQDVNKLSKQPTPDKAEDNAFFPSPYSLSQYTAPKTDFDGVEHKGAYKDGKWKVLMIAAEERYVLLENGKMFSTGNHPVEMLLPLHHLMEAGFDVDVATLSGYPAKLELWAMPTEDEAVISTYNKLKEKLKQPKKLADVIKNELGPDSDYLSVFIPGGHAAVVGISESEDVQQTLDWALENDRFIVTLCHGPAALLSAGLNREKSPLEGYSVCVFPDSLDEGANIEIGYLPGRLKWLVADLLTKQSLKVVNDDMTGRTLKDRKLLTGDSPLASNELGKLAVNEMLNAIQNK.

Over residues 1–12 (MSQDVNKLSKQP) the composition is skewed to polar residues. The tract at residues 1 to 23 (MSQDVNKLSKQPTPDKAEDNAFF) is disordered. Cys190 (nucleophile) is an active-site residue.

The protein belongs to the peptidase C56 family. HchA subfamily.

It is found in the cytoplasm. The catalysed reaction is N(omega)-(1-hydroxy-2-oxopropyl)-L-arginyl-[protein] + H2O = lactate + L-arginyl-[protein] + H(+). The enzyme catalyses N(6)-(1-hydroxy-2-oxopropyl)-L-lysyl-[protein] + H2O = lactate + L-lysyl-[protein] + H(+). It catalyses the reaction S-(1-hydroxy-2-oxopropyl)-L-cysteinyl-[protein] + H2O = lactate + L-cysteinyl-[protein] + H(+). It carries out the reaction N(omega)-(1-hydroxy-2-oxoethyl)-L-arginyl-[protein] + H2O = L-arginyl-[protein] + glycolate + H(+). The catalysed reaction is N(6)-(1-hydroxy-2-oxoethyl)-L-lysyl-[protein] + H2O = glycolate + L-lysyl-[protein] + H(+). The enzyme catalyses S-(1-hydroxy-2-oxoethyl)-L-cysteinyl-[protein] + H2O = glycolate + L-cysteinyl-[protein] + H(+). It catalyses the reaction N(2)-(1-hydroxy-2-oxopropyl)-dGTP + H2O = lactate + dGTP + H(+). It carries out the reaction N(2)-(1-hydroxy-2-oxopropyl)-GTP + H2O = lactate + GTP + H(+). The catalysed reaction is N(2)-(1-hydroxy-2-oxopropyl)-GDP + H2O = lactate + GDP + H(+). The enzyme catalyses N(2)-(1-hydroxy-2-oxopropyl)-GMP + H2O = lactate + GMP + H(+). It catalyses the reaction N(2)-(1-hydroxy-2-oxoethyl)-dGTP + H2O = dGTP + glycolate + H(+). It carries out the reaction N(2)-(1-hydroxy-2-oxoethyl)-GTP + H2O = glycolate + GTP + H(+). The catalysed reaction is N(2)-(1-hydroxy-2-oxoethyl)-GDP + H2O = glycolate + GDP + H(+). The enzyme catalyses N(2)-(1-hydroxy-2-oxoethyl)-GMP + H2O = glycolate + GMP + H(+). It catalyses the reaction an N(2)-(1-hydroxy-2-oxopropyl)-guanosine in RNA + H2O = a guanosine in RNA + lactate + H(+). It carries out the reaction an N(2)-(1-hydroxy-2-oxopropyl)-2'-deoxyguanosine in DNA + H2O = a 2'-deoxyguanosine in DNA + lactate + H(+). The catalysed reaction is an N(2)-(1-hydroxy-2-oxoethyl)-guanosine in RNA + H2O = a guanosine in RNA + glycolate + H(+). The enzyme catalyses an N(2)-(1-hydroxy-2-oxoethyl)-2'-deoxyguanosine in DNA + H2O = a 2'-deoxyguanosine in DNA + glycolate + H(+). Its function is as follows. Protein and nucleotide deglycase that catalyzes the deglycation of the Maillard adducts formed between amino groups of proteins or nucleotides and reactive carbonyl groups of glyoxals. Thus, functions as a protein deglycase that repairs methylglyoxal- and glyoxal-glycated proteins, and releases repaired proteins and lactate or glycolate, respectively. Deglycates cysteine, arginine and lysine residues in proteins, and thus reactivates these proteins by reversing glycation by glyoxals. Acts on early glycation intermediates (hemithioacetals and aminocarbinols), preventing the formation of Schiff bases and advanced glycation endproducts (AGE). Also functions as a nucleotide deglycase able to repair glycated guanine in the free nucleotide pool (GTP, GDP, GMP, dGTP) and in DNA and RNA. Is thus involved in a major nucleotide repair system named guanine glycation repair (GG repair), dedicated to reversing methylglyoxal and glyoxal damage via nucleotide sanitization and direct nucleic acid repair. Plays an important role in protecting cells from carbonyl stress. The chain is Protein/nucleic acid deglycase HchA from Staphylococcus aureus (strain MRSA252).